A 1801-amino-acid chain; its full sequence is Laminin subunit beta-2 (1801 aa).

The N-terminal stretch at 1–35 (MEWASGKPGRGRQGQPVPWELRLGLLLSVLAATLA) is a signal peptide. In terms of domain architecture, Laminin N-terminal spans 46–285 (SRGSCYPATG…ALYELVIRGN (240 aa)). Residue N251 is glycosylated (N-linked (GlcNAc...) asparagine). Disulfide bonds link C286/C295, C288/C313, C315/C324, C327/C347, C350/C359, C352/C377, C380/C389, C392/C410, C413/C426, C415/C441, C443/C452, C455/C470, C473/C487, C475/C494, C496/C505, C508/C522, C525/C537, C527/C544, and C546/C555. 4 consecutive Laminin EGF-like domains span residues 286–349 (CFCY…ACRK), 350–412 (CECN…ACRP), 413–472 (CDCD…GCQR), and 473–524 (CQCN…GCRP). An N-linked (GlcNAc...) asparagine glycan is attached at N371. Residues 525–555 (CDCDVGGALDPQCDEATGQCPCRPHMIGRRC) enclose the Laminin EGF-like 5; truncated domain. One can recognise a Laminin IV type B domain in the interval 564–780 (RPFLDHLTWE…LLISASSLVY (217 aa)). 32 disulfide bridges follow: C786–C798, C788–C805, C807–C816, C819–C831, C834–C846, C836–C853, C855–C864, C867–C877, C880–C889, C882–C896, C899–C908, C911–C927, C930–C946, C932–C957, C959–C968, C971–C986, C989–C1003, C991–C1010, C1013–C1022, C1025–C1038, C1041–C1061, C1043–C1068, C1070–C1079, C1082–C1095, C1098–C1110, C1100–C1117, C1119–C1128, C1131–C1143, C1146–C1158, C1148–C1165, C1167–C1176, and C1179–C1190. Laminin EGF-like domains follow at residues 786-833 (CQCD…GCQA), 834-879 (CQCS…NCRP), 880-929 (CVCN…QCRP), 930-988 (CPCP…RCQL), 989-1040 (CECS…SCHR), 1041-1097 (CTCN…GCQP), 1098-1145 (CACH…QCRA), and 1146-1192 (CDCD…ACHP). N-linked (GlcNAc...) asparagine glycosylation is present at N1088. Residues 1193–1412 (CHACFGDWDR…LSLTGVNELV (220 aa)) are domain II. An N-linked (GlcNAc...) asparagine glycan is attached at N1252. Residues 1259 to 1306 (AKLVEATEGLRHEIGKTTERLTQLEAELTDVQDENFNANHALSGLERD) adopt a coiled-coil conformation. N-linked (GlcNAc...) asparagine glycosylation is found at N1311 and N1351. The tract at residues 1413 to 1445 (CGAPGDAPCATSPCGGAGCRDEDGQPRCGGLGC) is domain alpha. A domain I region spans residues 1446–1801 (SGAAATADLA…LQVQIYNTCQ (356 aa)). Positions 1475–1529 (GILSRVSETRRQAEEAQQRAQAALDKANASRGQVEQANQELRELIQNVKDFLSQE) form a coiled coil. N1502 carries N-linked (GlcNAc...) asparagine glycosylation. S1535 bears the Phosphoserine mark. Positions 1576-1793 (LAHTMGDVRR…RSVLQAINLQ (218 aa)) form a coiled coil. A compositionally biased stretch (low complexity) spans 1684–1694 (ASTAEETAGSA). The segment at 1684 to 1703 (ASTAEETAGSAQSRAREAEK) is disordered.

In terms of assembly, laminin is a complex glycoprotein, consisting of three different polypeptide chains (alpha, beta, gamma), which are bound to each other by disulfide bonds into a cross-shaped molecule comprising one long and three short arms with globules at each end. Beta-2 is a subunit of laminin-3 (laminin-121 or S-laminin), laminin-4 (laminin-221 or S-merosin), laminin-7 (laminin-321 or KS-laminin), laminin-9 (laminin-421), laminin-11 (laminin-521), laminin-14 (laminin-423) and laminin-15 (laminin-523). As to expression, found in the basement membranes (major component). S-laminin is concentrated in the synaptic cleft of the neuromuscular junction.

Its subcellular location is the secreted. It localises to the extracellular space. The protein resides in the extracellular matrix. It is found in the basement membrane. Functionally, binding to cells via a high affinity receptor, laminin is thought to mediate the attachment, migration and organization of cells into tissues during embryonic development by interacting with other extracellular matrix components. The polypeptide is Laminin subunit beta-2 (Lamb2) (Rattus norvegicus (Rat)).